The sequence spans 371 residues: Forkhead box protein J1.2 (371 aa).

Disordered regions lie at residues 45 to 74 (ANSR…APRT) and 80 to 99 (VAVP…PVQE). The segment at residues 109–203 (KPPYSYATLI…VNGVLKRRRM (95 aa)) is a DNA-binding region (fork-head). A disordered region spans residues 228–248 (PSSHHMQHISGGHRQSRRYEK).

The protein belongs to the FOXJ1 family. Expressed diffusely through much of gastrula and neurula stage embryos. At stage 23 (late neurula), limited to the otic vesicle. By stage 28 (tailbud), also expressed transiently in the presumptive nephrostomes of the pronephros. At stage 35 (early tadpole), expressed broadly in the head and strongly expressed in the developing gill structures.

The protein resides in the nucleus. Its function is as follows. Key transcription factor required for motile ciliogenesis. Activates genes essential for motile cilia formation and function. This Xenopus tropicalis (Western clawed frog) protein is Forkhead box protein J1.2.